The sequence spans 463 residues: Hexose-6-phosphate:phosphate antiporter (463 aa).

The Cytoplasmic segment spans residues 1 to 24 (MLAFLNQVRKPTLDLPLDVRRKMW). A helical transmembrane segment spans residues 25-45 (FKPFMQSYLVVFIGYLTMYLI). At 46 to 60 (RKNFNIAQNDMISTY) the chain is on the periplasmic side. The helical transmembrane segment at 61-81 (GLSMTELGMIGLGFSITYGVG) threads the bilayer. Over 82–96 (KTLVSYYADGKNTKQ) the chain is Cytoplasmic. A helical membrane pass occupies residues 97–117 (FLPFMLILSAICMLGFSASMG). Topologically, residues 118–122 (AGSTS) are periplasmic. The helical transmembrane segment at 123 to 143 (LFLMIAFYALSGFFQSTGGSC) threads the bilayer. Residues 144–159 (SYSTITKWTPRRKRGT) lie on the Cytoplasmic side of the membrane. A helical transmembrane segment spans residues 160–180 (FLGFWNISHNLGGAGAAGVAL). The Periplasmic portion of the chain corresponds to 181 to 189 (FGANYLFDG). A helical membrane pass occupies residues 190–210 (HVIGMFIFPSIIALIVGFIGL). Residues 211–259 (RFGSDSPESYGLGKAEELFGEEISEEDKETEENEMTKWQIFVEYVLKNK) lie on the Cytoplasmic side of the membrane. A helical membrane pass occupies residues 260–280 (VIWLLCFSNIFLYVVRIGIDQ). The Periplasmic portion of the chain corresponds to 281-297 (WSTVYAFQELKLSKEVA). Residues 298–318 (IQGFTLFEVGALVGTLLWGWL) traverse the membrane as a helical segment. Residues 319 to 326 (SDLANGRR) lie on the Cytoplasmic side of the membrane. Residues 327 to 347 (ALVACVALALIIATLGVYQHA) form a helical membrane-spanning segment. The Periplasmic portion of the chain corresponds to 348–357 (SNQYVYLASL). Residues 358–378 (FALGFLVFGPQLLIGVAAVGF) traverse the membrane as a helical segment. Residues 379–382 (VPKK) lie on the Cytoplasmic side of the membrane. The helical transmembrane segment at 383-403 (AIGAADGIKGTFAYLIGDSFA) threads the bilayer. Over 404-425 (KLGLGMIADGTPVFGLTGWAGT) the chain is Periplasmic. Residues 426–446 (FAALDAAAIGCICLMAMVAVM) form a helical membrane-spanning segment. Residues 447–463 (EERKIRREKKIQQVNIA) are Cytoplasmic-facing.

The protein belongs to the major facilitator superfamily. Organophosphate:Pi antiporter (OPA) (TC 2.A.1.4) family.

The protein localises to the cell inner membrane. Its function is as follows. Mediates the exchange of external hexose 6-phosphate and internal inorganic phosphate. This Salmonella typhimurium (strain LT2 / SGSC1412 / ATCC 700720) protein is Hexose-6-phosphate:phosphate antiporter (uhpT).